The chain runs to 581 residues: Proline--tRNA ligase (581 aa).

This sequence belongs to the class-II aminoacyl-tRNA synthetase family. ProS type 1 subfamily. As to quaternary structure, homodimer.

It is found in the cytoplasm. The catalysed reaction is tRNA(Pro) + L-proline + ATP = L-prolyl-tRNA(Pro) + AMP + diphosphate. Functionally, catalyzes the attachment of proline to tRNA(Pro) in a two-step reaction: proline is first activated by ATP to form Pro-AMP and then transferred to the acceptor end of tRNA(Pro). As ProRS can inadvertently accommodate and process non-cognate amino acids such as alanine and cysteine, to avoid such errors it has two additional distinct editing activities against alanine. One activity is designated as 'pretransfer' editing and involves the tRNA(Pro)-independent hydrolysis of activated Ala-AMP. The other activity is designated 'posttransfer' editing and involves deacylation of mischarged Ala-tRNA(Pro). The misacylated Cys-tRNA(Pro) is not edited by ProRS. This chain is Proline--tRNA ligase, found in Chlamydia trachomatis serovar A (strain ATCC VR-571B / DSM 19440 / HAR-13).